Here is a 1051-residue protein sequence, read N- to C-terminus: Eukaryotic translation initiation factor 3 subunit A (1051 aa).

Residues 92-121 (LKKFIELAEKKVTEAQAKADEIQSSLESAA) are a coiled coil. One can recognise a PCI domain in the interval 339 to 523 (MTKAASFVLL…GVLTFDTDIF (185 aa)). Residues 608 to 905 (RVLIEKKKEA…EAEARRAARK (298 aa)) are a coiled coil. Basic and acidic residues-rich tracts occupy residues 617-632 (AATD…EETR), 642-664 (EAEK…RDEQ), 794-901 (KEVS…EARR), and 916-926 (AELERPVERTA). Disordered regions lie at residues 617-664 (AATD…RDEQ) and 794-1051 (KEVS…QQQQ). Composition is skewed to low complexity over residues 948 to 961 (KEAA…AAAE) and 1010 to 1039 (SSSS…SPAP).

It belongs to the eIF-3 subunit A family. In terms of assembly, component of the eukaryotic translation initiation factor 3 (eIF-3) complex.

It localises to the cytoplasm. RNA-binding component of the eukaryotic translation initiation factor 3 (eIF-3) complex, which is involved in protein synthesis of a specialized repertoire of mRNAs and, together with other initiation factors, stimulates binding of mRNA and methionyl-tRNAi to the 40S ribosome. The eIF-3 complex specifically targets and initiates translation of a subset of mRNAs involved in cell proliferation. The chain is Eukaryotic translation initiation factor 3 subunit A (tif32) from Aspergillus fumigatus (strain CBS 144.89 / FGSC A1163 / CEA10) (Neosartorya fumigata).